The primary structure comprises 215 residues: N-(5'-phosphoribosyl)anthranilate isomerase (215 aa).

Belongs to the TrpF family.

The enzyme catalyses N-(5-phospho-beta-D-ribosyl)anthranilate = 1-(2-carboxyphenylamino)-1-deoxy-D-ribulose 5-phosphate. It functions in the pathway amino-acid biosynthesis; L-tryptophan biosynthesis; L-tryptophan from chorismate: step 3/5. The chain is N-(5'-phosphoribosyl)anthranilate isomerase from Parvibaculum lavamentivorans (strain DS-1 / DSM 13023 / NCIMB 13966).